The sequence spans 472 residues: PEP-dependent dihydroxyacetone kinase, phosphoryl donor subunit DhaM (472 aa).

The region spanning 1 to 135 is the PTS EIIA type-4 domain; that stretch reads MVNLVIVSHS…HALEAKREQL (135 aa). Histidine 9 acts as the Tele-phosphohistidine intermediate in catalysis. One can recognise an HPr domain in the interval 155–242; it reads ARSLAVVIKN…QLAEDNFGET (88 aa). Histidine 169 serves as the catalytic Pros-phosphohistidine intermediate. The interval 264–472 is PTS EI-like, N-terminal part; sequence QPVLCTVQAK…VKTQRFNRQG (209 aa). Histidine 430 acts as the Tele-phosphohistidine intermediate in catalysis.

Belongs to the PEP-utilizing enzyme family. Homodimer. The dihydroxyacetone kinase complex is composed of a homodimer of DhaM, a homodimer of DhaK and the subunit DhaL.

It catalyses the reaction dihydroxyacetone + phosphoenolpyruvate = dihydroxyacetone phosphate + pyruvate. It participates in polyol metabolism; glycerol degradation. Component of the dihydroxyacetone kinase complex, which is responsible for the phosphoenolpyruvate (PEP)-dependent phosphorylation of dihydroxyacetone. DhaM serves as the phosphoryl donor. Is phosphorylated by phosphoenolpyruvate in an EI- and HPr-dependent reaction, and a phosphorelay system on histidine residues finally leads to phosphoryl transfer to DhaL and dihydroxyacetone. The protein is PEP-dependent dihydroxyacetone kinase, phosphoryl donor subunit DhaM of Escherichia coli (strain K12).